Here is a 506-residue protein sequence, read N- to C-terminus: Maturase K (506 aa).

This sequence belongs to the intron maturase 2 family. MatK subfamily.

It is found in the plastid. Its subcellular location is the chloroplast. Its function is as follows. Usually encoded in the trnK tRNA gene intron. Probably assists in splicing its own and other chloroplast group II introns. This chain is Maturase K, found in Trifolium striatum (Knotted clover).